A 122-amino-acid chain; its full sequence is uncharacterized protein (122 aa).

A signal peptide spans 1 to 18 (MYSMAFLASSGLVANSSA). The N-linked (GlcNAc...) asparagine glycan is linked to asparagine 15.

This is an uncharacterized protein from Saccharomyces cerevisiae (strain ATCC 204508 / S288c) (Baker's yeast).